A 105-amino-acid chain; its full sequence is Secreted effector protein PINE1 (105 aa).

Positions 1–21 (MKLSQPLSIFAILAASTVAVA) are cleaved as a signal peptide.

Interacts with Arabidopsis thaliana PGIP1.

The protein localises to the secreted. In terms of biological role, effector protein required for full virulence. Directly interacts with and functionally inactivates PG-inhibiting proteins (PGIPs). PGIPs are a defense mechanism of infected plants, that inhibit the plant pathogens secreted polygalacturonases (PGs) used to degrade the plant cell wall. Excerts its function by interacting with host PGIPs to negate their polygalacturonase-inhibiting function via enhanced dissociation of PGIPs from PGs. The protein is Secreted effector protein PINE1 of Sclerotinia sclerotiorum (strain ATCC 18683 / 1980 / Ss-1) (White mold).